Here is a 390-residue protein sequence, read N- to C-terminus: Serine/threonine/tyrosine-protein kinase HT1 (390 aa).

The region spanning 86–359 (LFIGNKFASG…GLPLTSHASL (274 aa)) is the Protein kinase domain. ATP-binding positions include 92–100 (FASGAHSRI) and K113. The Proton acceptor role is filled by D212.

The protein belongs to the protein kinase superfamily. Ser/Thr protein kinase family. As to quaternary structure, interacts with DTX56. Binds to MPK4 and MPK12. Associates to CBC1 and CBC2. Post-translationally, autophosphorylated. Mainly localizes in guard cells. Expressed at low level in leaves, stems, roots and flowers.

Its subcellular location is the cell membrane. It carries out the reaction L-seryl-[protein] + ATP = O-phospho-L-seryl-[protein] + ADP + H(+). It catalyses the reaction L-threonyl-[protein] + ATP = O-phospho-L-threonyl-[protein] + ADP + H(+). The enzyme catalyses L-tyrosyl-[protein] + ATP = O-phospho-L-tyrosyl-[protein] + ADP + H(+). Its activity is regulated as follows. Inhibited by MPK4 and MPK12. Serine/threonine/tyrosine kinase involved in the control of stomatal movement in response to CO(2). Functions as a major negative regulator of CO(2)-induced stomatal closing. Does not seem to be involved in stomatal closure in response to abscisic acid (ABA) or light. Involved in the control of red light-induced stomatal opening. Is epistatic to SRK2E/OST1 function during stomatal responses to red light and altered CO(2). Phosphorylates SRK2E/OST1 and GHR1 to prevents SRK2E/OST1- and GHR1-induced activation of SLAC1, thus preventing stomatal closure. Mediates the phosphorylation of CBC1 and CBC2. This Arabidopsis thaliana (Mouse-ear cress) protein is Serine/threonine/tyrosine-protein kinase HT1.